We begin with the raw amino-acid sequence, 469 residues long: Trehalose-6-phosphate synthase (469 aa).

Arginine 10 contacts D-glucose 6-phosphate. 22-23 (GG) is a UDP-alpha-D-glucose binding site. Residues tyrosine 77 and aspartate 131 each coordinate D-glucose 6-phosphate. Residues arginine 262 and lysine 267 each coordinate UDP-alpha-D-glucose. Arginine 300 provides a ligand contact to D-glucose 6-phosphate. 365–369 (LVAKE) is a UDP-alpha-D-glucose binding site.

It belongs to the glycosyltransferase 20 family. In terms of assembly, homotetramer.

It carries out the reaction D-glucose 6-phosphate + UDP-alpha-D-glucose = alpha,alpha-trehalose 6-phosphate + UDP + H(+). The protein operates within glycan biosynthesis; trehalose biosynthesis. In terms of biological role, probably involved in the osmoprotection via the biosynthesis of trehalose. Catalyzes the transfer of glucose from UDP-alpha-D-glucose (UDP-Glc) to D-glucose 6-phosphate (Glc-6-P) to form trehalose-6-phosphate. Acts with retention of the anomeric configuration of the UDP-sugar donor. This Sodalis glossinidius (strain morsitans) protein is Trehalose-6-phosphate synthase.